Consider the following 305-residue polypeptide: MRVAIAGYGDLTRYICEEFVKAGHVLVILTRSYKPQLESQGVAQAITDYSPSSLRAPLADCEVLISTISDISSAYTNVHRNLILACQESPRCKRFIPAEFVADIEAYPDEPGFYYAPHEPIREMLRGQTDLEWTLVCIGWLSDYFVPSKNRHIKDIGEFHPMNWAGNKIVIPGTGNEPVDFTWARDVVRGLASLIEAPRGSWEPYTFMSGERSCWNDATRLAVQKYRPGIPIQHVSLHSVAGMIKTAKDENTEVLADYYLLSISQACAIPTDKVEAHREKYFSGVTFRSLRDGLCQVDEHPDSIL.

This sequence belongs to the NmrA-type oxidoreductase family. Isoflavone reductase subfamily.

It carries out the reaction L-pipecolate + O2 = L-1-piperideine-6-carboxylate + H2O2 + H(+). The protein operates within mycotoxin biosynthesis. Functionally, oxidoreductase; part of the gene cluster that mediates the biosynthesis of swainsonine (SW), a cytotoxic fungal alkaloid and a potential cancer therapy drug. Swainsonine production occurs via a multibranched pathway and is dispensable for fungal colonization of plants and infection of insect hosts. The first step of swainsonine biosynthesis is the production of the precursor pipecolic acid (PA) via conversion of L-lysine (Lys) to 1-piperideine-6-carboxylate (P6C) by the aminotransferase swnA, the latter being further reduced to PA by the reductase swnR. PA can be converted from lysine by both the SW biosynthetic cluster and the unclustered genes such as lysine cyclodeaminase. The PKS-NRPS hybrid synthetase swnK uptakes and condensates PA and malonyl-CoA with and without skipping of the ketoreductase (KR) domain in order to produce 3 intermediates, 1-oxoindolizidine, (1S)-1-hydroxyindolizin, and (1R)-1-hydroxyindolizine; with the transisomer (1S)-1-hydroxyindolizin being predominant. The terminal thioester reductase (TE) domain of swnK is involved in reduction of the thioester bond to release the intermediate aldehydes. The oxidoreductase swnN could contribute to the reduction of 1-oxoindolizidine to (1S)-1-hydroxyindolizin and (1R)-1-hydroxyindolizine, contributing to the major route of SW production. The dioxygenase swnH2 would be responsible for the oxidization of (1R)-1-hydroxyindolizine into (1R,2S)-1,2-dihydroxyindolizine and of (1S)-1-hydroxyindolizin to yield both (1R,2S)-1,2-dihydroxyindolizine and (1S,2S)-1,2-dihydroxyindolizine. The dioxygenase swnH1 then performs the conversion of the 1,2-dihydroxyindolizine epimers to SW. This Metarhizium robertsii (strain ARSEF 23 / ATCC MYA-3075) (Metarhizium anisopliae (strain ARSEF 23)) protein is Oxidoreductase swnR.